The sequence spans 889 residues: Cytoplasmic aconitate hydratase (889 aa).

Substrate contacts are provided by residues Gln-86 and 205–207 (DSH). Positions 437, 503, and 506 each coordinate [4Fe-4S] cluster. Substrate contacts are provided by Arg-536 and Arg-541. A Phosphothreonine modification is found at Thr-628. Substrate contacts are provided by residues Arg-699 and 779–780 (SR).

This sequence belongs to the aconitase/IPM isomerase family. In terms of assembly, interacts (when associated with the 4Fe-4S) with FBXL5. Interacts with frataxin(81-210). The cofactor is [4Fe-4S] cluster.

The protein resides in the cytoplasm. Its subcellular location is the cytosol. The enzyme catalyses citrate = D-threo-isocitrate. Functionally, bifunctional iron sensor that switches between 2 activities depending on iron availability. Iron deprivation, promotes its mRNA binding activity through which it regulates the expression of genes involved in iron uptake, sequestration and utilization. Binds to iron-responsive elements (IRES) in the untranslated region of target mRNAs preventing for instance the translation of ferritin and aminolevulinic acid synthase and stabilizing the transferrin receptor mRNA. Conversely, when cellular iron levels are high, binds a 4Fe-4S cluster which precludes RNA binding activity and promotes the aconitase activity, the isomerization of citrate to isocitrate via cis-aconitate. The polypeptide is Cytoplasmic aconitate hydratase (ACO1) (Homo sapiens (Human)).